A 60-amino-acid chain; its full sequence is Large ribosomal subunit protein uL30 (60 aa).

This sequence belongs to the universal ribosomal protein uL30 family. Part of the 50S ribosomal subunit.

This chain is Large ribosomal subunit protein uL30, found in Streptococcus pneumoniae (strain Hungary19A-6).